Consider the following 320-residue polypeptide: Malate dehydrogenase (320 aa).

Residues 10–15 and aspartate 34 each bind NAD(+); that span reads GSGMIG. Substrate contacts are provided by arginine 83 and arginine 89. NAD(+) contacts are provided by residues asparagine 96 and 119 to 121; that span reads ITN. 2 residues coordinate substrate: asparagine 121 and arginine 152. Histidine 176 acts as the Proton acceptor in catalysis.

Belongs to the LDH/MDH superfamily. MDH type 3 family.

It catalyses the reaction (S)-malate + NAD(+) = oxaloacetate + NADH + H(+). Functionally, catalyzes the reversible oxidation of malate to oxaloacetate. The chain is Malate dehydrogenase from Brucella abortus (strain S19).